Consider the following 512-residue polypeptide: MGELQFKWLFWRSFAESGGTFQTVLIFLFIPYSLTVDYRATPVLSDTTFVWVWNVPTEACVENVTEPIDLSFFSLIGSPRKTAIGQPVTLFYVDRLGNYPHIDAQQTEHHGGIPQKGDLTTHLVKAKEDVERYIPTDKLGLAIIDWEEWRPTWMRNWTPKDIYRNKSIELVQAADPAINITEATVRAKAQFEGAAKEFMEGTLKLGKHIRPKHLWGFYLFPDCYNNKFQVDNYDGQCPDVEKKRNDDLDWLWKESTGLYPSVYLKKDLKSSRKATLYVRYRVLESIRVSKVSDESNPVPIFVYIRLVFTDHVSEYLLEDDLVNTIGEIVAQGTSGIIIWDAMSLAQRSAGCPILRQYMKTTLNPYIVNVTLAAKMCSQTLCKEKGMCSRKTESSDAYLHLDPSSFSINVTEAGKYEVLGKPEVKDLEYFSEHFKCSCFSKMTCEETSDMRSIQDVNVCMGDNVCIKATLGPNSAFHLLPGKGLLLMTTLAHILHHLPHDIFVFPWKMLVSTP.

The N-terminal stretch at methionine 1 to threonine 35 is a signal peptide. Disulfide bonds link cysteine 60-cysteine 351 and cysteine 223-cysteine 237. The N-linked (GlcNAc...) asparagine glycan is linked to asparagine 63. Glutamate 147 functions as the Proton donor in the catalytic mechanism. N-linked (GlcNAc...) asparagine glycans are attached at residues asparagine 165 and asparagine 179. Residue asparagine 368 is glycosylated (N-linked (GlcNAc...) asparagine). Intrachain disulfides connect cysteine 376-cysteine 387, cysteine 381-cysteine 435, and cysteine 437-cysteine 464. N-linked (GlcNAc...) asparagine glycosylation occurs at asparagine 408.

The protein belongs to the glycosyl hydrolase 56 family.

The protein localises to the cell membrane. It catalyses the reaction Random hydrolysis of (1-&gt;4)-linkages between N-acetyl-beta-D-glucosamine and D-glucuronate residues in hyaluronate.. In terms of biological role, involved in sperm-egg adhesion. Upon fertilization sperm must first penetrate a layer of cumulus cells that surrounds the egg before reaching the zona pellucida. The cumulus cells are embedded in a matrix containing hyaluronic acid which is formed prior to ovulation. This protein aids in penetrating the layer of cumulus cells by digesting hyaluronic acid. The sequence is that of Hyaluronidase PH-20 (Spam1) from Rattus norvegicus (Rat).